A 434-amino-acid chain; its full sequence is Protein HEAT INTOLERANT 4 (434 aa).

A Nuclear localization signal 1 motif is present at residues 1 to 8; sequence MKKGAKRK. Basic residues predominate over residues 1–15; the sequence is MKKGAKRKGVSKAGR. The interval 1–131 is disordered; that stretch reads MKKGAKRKGV…PVPKAKKPRA (131 aa). Positions 30–53 are enriched in basic and acidic residues; it reads ETTKTTQEESQQHEEEVVDEVKEN. Residues 54 to 82 show a composition bias toward acidic residues; sequence GEEEEAKGDQEEEEDAKPDSLEEDEENQE. Basic and acidic residues predominate over residues 83 to 98; the sequence is DEVKAEEVKEEVEKKP. The short motif at 95 to 102 is the Nuclear localization signal 2 element; sequence EKKPVARR. The segment covering 99–110 has biased composition (basic residues); the sequence is VARRGGKRKRAT. Positions 111 to 122 are enriched in basic and acidic residues; that stretch reads KKDTEIKDEKKP. A coiled-coil region spans residues 363 to 394; the sequence is VKEQVRAAKKANREAKDARKKAIEEMSEDTKQ. The short motif at 370–377 is the Nuclear localization signal 3 element; sequence AKKANREA.

It localises to the nucleus. It is found in the nucleolus. In terms of biological role, essential protein required for basal thermotolerance, especially during heat-induced chromocentre decondensation, thus regulating transcriptional gene silencing (TGS). This is Protein HEAT INTOLERANT 4 from Arabidopsis thaliana (Mouse-ear cress).